The following is a 183-amino-acid chain: Transposon gamma-delta resolvase (183 aa).

The region spanning 2-137 (RLFGYARVST…EGRQEAMAKG (136 aa)) is the Resolvase/invertase-type recombinase catalytic domain. The active-site O-(5'-phospho-DNA)-serine intermediate is Ser10. Positions 161–180 (ASHISKTMNIARSTVYKVIN) form a DNA-binding region, H-T-H motif.

The protein belongs to the site-specific recombinase resolvase family.

Its function is as follows. This protein catalyzes the site-specific recombination of the transposon and also regulates its frequency of transposition. The polypeptide is Transposon gamma-delta resolvase (tnpR) (Escherichia coli (strain K12)).